The chain runs to 509 residues: Maturase K (509 aa).

This sequence belongs to the intron maturase 2 family. MatK subfamily.

The protein localises to the plastid. It is found in the chloroplast. Usually encoded in the trnK tRNA gene intron. Probably assists in splicing its own and other chloroplast group II introns. This is Maturase K from Amentotaxus argotaenia (Chinese flowering yew).